Reading from the N-terminus, the 265-residue chain is MSAFVITTEQVWLDKYKYDDAEKQYYENLSMGSASNKPHNSPQSAASALSNSGDGSELAARVANLEQENQSLHKVVKDLQSAISKLESRLSTLEKSSKSQKPAAASQPAIEVAARVQKVQVTPAAKEENGTGEDDDDDDDIDLFGSDNEEEDAEAARIREERLKQYAEKKSKKPGVIAKSSILLDVKPWDDETDMAKLEECVRTVQMDGLVWGSSKLVPVGYGIKKLQIQCVVEDDKVGTDILEEEITKFEDYVQSVDIAAFNKI.

Residues M31–D54 are compositionally biased toward polar residues. 2 disordered regions span residues M31 to N64 and K118 to A155. Acidic residues predominate over residues G130–A153.

This sequence belongs to the EF-1-beta/EF-1-delta family. In terms of assembly, EF-1 is composed of 4 subunits: alpha, beta, delta, and gamma.

In terms of biological role, EF-1-beta and EF-1-delta stimulate the exchange of GDP bound to EF-1-alpha to GTP. In Xenopus laevis (African clawed frog), this protein is Elongation factor 1-delta (eef1d).